Reading from the N-terminus, the 262-residue chain is 3-methyl-2-oxobutanoate hydroxymethyltransferase (262 aa).

Residues Asp44 and Asp83 each coordinate Mg(2+). 3-methyl-2-oxobutanoate-binding positions include 44–45 (DS), Asp83, and Lys113. Glu115 lines the Mg(2+) pocket. Catalysis depends on Glu182, which acts as the Proton acceptor.

Belongs to the PanB family. As to quaternary structure, homodecamer; pentamer of dimers. The cofactor is Mg(2+).

The protein localises to the cytoplasm. It carries out the reaction 3-methyl-2-oxobutanoate + (6R)-5,10-methylene-5,6,7,8-tetrahydrofolate + H2O = 2-dehydropantoate + (6S)-5,6,7,8-tetrahydrofolate. It functions in the pathway cofactor biosynthesis; (R)-pantothenate biosynthesis; (R)-pantoate from 3-methyl-2-oxobutanoate: step 1/2. Its function is as follows. Catalyzes the reversible reaction in which hydroxymethyl group from 5,10-methylenetetrahydrofolate is transferred onto alpha-ketoisovalerate to form ketopantoate. This Picosynechococcus sp. (strain ATCC 27264 / PCC 7002 / PR-6) (Agmenellum quadruplicatum) protein is 3-methyl-2-oxobutanoate hydroxymethyltransferase.